The following is a 478-amino-acid chain: Zinc finger protein 410 (478 aa).

Residues 187–213 form a disordered region; sequence NAKTSSNGENVHLGSGDGQSKDSGPLP. 5 consecutive C2H2-type zinc fingers follow at residues 219–243, 249–273, 279–303, 309–333, and 339–362; these read LKCT…LKTH, FICP…MRTH, FMCH…RRIH, FLCE…LVVH, and HQCQ…RKHH. Zn(2+) contacts are provided by Cys221, Cys226, His239, His243, Cys251, Cys256, His269, His273, Cys281, Cys286, His299, His303, Cys311, Cys316, His329, His333, Cys341, Cys344, His357, and His361.

As to quaternary structure, interacts with CDKN2A/p14ARF. Sumoylated. Sumoylation increases its half-life, possibly by blocking ubiquitin-mediated degradation. Post-translationally, O-glycosylated. O-GlcNAcylation may occur in response to increasing glucose levels and affect transcription factor activity. As to expression, widely expressed.

The protein resides in the nucleus. It localises to the chromosome. Transcription factor that binds to the sequence motif 5'-CATCCCATAATA-3', and is specifically required to silence expression of fetal hemoglobin in adult erythroid cells. Prevents expression of fetal hemoglobin genes HBG1 and HBG2 through CHD4: acts as a direct transcriptional activator of CHD4, a central component of the NuRD complex that represses transcription of fetal hemoglobin genes HBG1 and HBG2 in erythroid cells. May also activate transcription of matrix-remodeling genes such as MMP1 during fibroblast senescence. May activate transcription of the gap junction gene GJC1, perhaps in response to increasing glucose. However, recent studies suggest that ZNF410 is dedicated to regulate expression of a single gene: CHD4. The sequence is that of Zinc finger protein 410 from Homo sapiens (Human).